Reading from the N-terminus, the 368-residue chain is 3-dehydroquinate synthase (368 aa).

Residues 131–132 (TT), Lys-144, and Lys-153 each bind NAD(+). 3 residues coordinate Zn(2+): Glu-186, His-249, and His-267.

This sequence belongs to the sugar phosphate cyclases superfamily. Dehydroquinate synthase family. Co(2+) serves as cofactor. It depends on Zn(2+) as a cofactor. Requires NAD(+) as cofactor.

Its subcellular location is the cytoplasm. The catalysed reaction is 7-phospho-2-dehydro-3-deoxy-D-arabino-heptonate = 3-dehydroquinate + phosphate. It functions in the pathway metabolic intermediate biosynthesis; chorismate biosynthesis; chorismate from D-erythrose 4-phosphate and phosphoenolpyruvate: step 2/7. Catalyzes the conversion of 3-deoxy-D-arabino-heptulosonate 7-phosphate (DAHP) to dehydroquinate (DHQ). The protein is 3-dehydroquinate synthase of Pelagibacter ubique (strain HTCC1062).